A 652-amino-acid chain; its full sequence is DNA ligase (652 aa).

Residues 29–33 (DSDYD), 78–79 (SL), and Glu107 contribute to the NAD(+) site. The N6-AMP-lysine intermediate role is filled by Lys109. 4 residues coordinate NAD(+): Arg130, Glu164, Lys278, and Lys302. Residues Cys395, Cys398, Cys413, and Cys418 each contribute to the Zn(2+) site. Residues 577–652 (NSDAALFGLT…IEDEDWLRQL (76 aa)) form the BRCT domain.

This sequence belongs to the NAD-dependent DNA ligase family. LigA subfamily. The cofactor is Mg(2+). Mn(2+) serves as cofactor.

It carries out the reaction NAD(+) + (deoxyribonucleotide)n-3'-hydroxyl + 5'-phospho-(deoxyribonucleotide)m = (deoxyribonucleotide)n+m + AMP + beta-nicotinamide D-nucleotide.. DNA ligase that catalyzes the formation of phosphodiester linkages between 5'-phosphoryl and 3'-hydroxyl groups in double-stranded DNA using NAD as a coenzyme and as the energy source for the reaction. It is essential for DNA replication and repair of damaged DNA. This chain is DNA ligase, found in Streptococcus pyogenes serotype M1.